The chain runs to 166 residues: Small ribosomal subunit protein uS5 (166 aa).

One can recognise an S5 DRBM domain in the interval 11–74 (LEDRVVSINR…EDAKKNLINV (64 aa)).

This sequence belongs to the universal ribosomal protein uS5 family. Part of the 30S ribosomal subunit. Contacts proteins S4 and S8.

Its function is as follows. With S4 and S12 plays an important role in translational accuracy. In terms of biological role, located at the back of the 30S subunit body where it stabilizes the conformation of the head with respect to the body. The polypeptide is Small ribosomal subunit protein uS5 (Latilactobacillus sakei subsp. sakei (strain 23K) (Lactobacillus sakei subsp. sakei)).